The primary structure comprises 235 residues: 7-cyano-7-deazaguanine synthase (235 aa).

16–26 (FSGGQDSTTCL) is a binding site for ATP. Residues cysteine 193, cysteine 201, cysteine 204, and cysteine 207 each coordinate Zn(2+).

Belongs to the QueC family. It depends on Zn(2+) as a cofactor.

The enzyme catalyses 7-carboxy-7-deazaguanine + NH4(+) + ATP = 7-cyano-7-deazaguanine + ADP + phosphate + H2O + H(+). It participates in purine metabolism; 7-cyano-7-deazaguanine biosynthesis. In terms of biological role, catalyzes the ATP-dependent conversion of 7-carboxy-7-deazaguanine (CDG) to 7-cyano-7-deazaguanine (preQ(0)). The polypeptide is 7-cyano-7-deazaguanine synthase (Actinobacillus succinogenes (strain ATCC 55618 / DSM 22257 / CCUG 43843 / 130Z)).